We begin with the raw amino-acid sequence, 352 residues long: Peptide chain release factor 1 (352 aa).

N5-methylglutamine is present on Gln-233. The interval Asn-288–Asn-309 is disordered. Residues Ala-289–Arg-306 are compositionally biased toward basic and acidic residues.

The protein belongs to the prokaryotic/mitochondrial release factor family. Methylated by PrmC. Methylation increases the termination efficiency of RF1.

The protein resides in the cytoplasm. Its function is as follows. Peptide chain release factor 1 directs the termination of translation in response to the peptide chain termination codons UAG and UAA. This Helicobacter pylori (strain Shi470) protein is Peptide chain release factor 1.